A 237-amino-acid polypeptide reads, in one-letter code: Phosphoribosylaminoimidazole-succinocarboxamide synthase (237 aa).

The protein belongs to the SAICAR synthetase family.

The enzyme catalyses 5-amino-1-(5-phospho-D-ribosyl)imidazole-4-carboxylate + L-aspartate + ATP = (2S)-2-[5-amino-1-(5-phospho-beta-D-ribosyl)imidazole-4-carboxamido]succinate + ADP + phosphate + 2 H(+). The protein operates within purine metabolism; IMP biosynthesis via de novo pathway; 5-amino-1-(5-phospho-D-ribosyl)imidazole-4-carboxamide from 5-amino-1-(5-phospho-D-ribosyl)imidazole-4-carboxylate: step 1/2. This is Phosphoribosylaminoimidazole-succinocarboxamide synthase from Halalkalibacterium halodurans (strain ATCC BAA-125 / DSM 18197 / FERM 7344 / JCM 9153 / C-125) (Bacillus halodurans).